We begin with the raw amino-acid sequence, 202 residues long: Large ribosomal subunit protein bL17 (202 aa).

Residues 132–202 (DAAQKAASAG…TEVEKADDDK (71 aa)) form a disordered region. Residues 134–168 (AQKAASAGAQEVTAAAAPQAAVEPEAVETEASAET) are compositionally biased toward low complexity. Positions 169–193 (AEAEVETAEVEAVDEASAEEADEAT) are enriched in acidic residues.

Belongs to the bacterial ribosomal protein bL17 family. Part of the 50S ribosomal subunit. Contacts protein L32.

This Mycolicibacterium vanbaalenii (strain DSM 7251 / JCM 13017 / BCRC 16820 / KCTC 9966 / NRRL B-24157 / PYR-1) (Mycobacterium vanbaalenii) protein is Large ribosomal subunit protein bL17.